Consider the following 484-residue polypeptide: MSDRIRVRYAPSPTGYLHIGNARTALFNYLYAKHYNGDFVIRIEDTDKKRNLEDGETSQFDNLKWLGLDWDESVDKDNGYGPYRQSERQHIYQPLIDQLLAEDKAYKCYMTEEELEAEREAQIARGEMPRYGGQHAHLTEEQRQQFEAEGRQPSIRFRVPQNQTYSFDDMVKGNISFDSNGIGDWVIVKKDGIPTYNFAVAIDDHYMQISDVIRGDDHISNTPKQIMIYEAFGWEPPRFGHMSLIVNEERKKLSKRDGQILQFIEQYRDLGYLPEALFNFIALLGWSPEGEEEIFSKEEFIKIFDEKRLSKSPAFFDKQKLAWVNNQYMKQKDTETVFQLALPHLIKANLIPEVPSEEDLSWGRKLIALYQKEMSYAGEIVPLSEMFFKEMPALGEEEQQVINGEQVPELMTHLFSKLEALEPFEAAEIKKTIKEVQKETGIKGKQLFMPIRVAVTGQMHGPELPNTIEVLGKEKVLNRLKQYK.

Positions 11–21 (PSPTGYLHIGN) match the 'HIGH' region motif. Residues 252–256 (KLSKR) carry the 'KMSKS' region motif. Lys-255 contacts ATP.

The protein belongs to the class-I aminoacyl-tRNA synthetase family. Glutamate--tRNA ligase type 1 subfamily. Monomer.

It is found in the cytoplasm. The enzyme catalyses tRNA(Glu) + L-glutamate + ATP = L-glutamyl-tRNA(Glu) + AMP + diphosphate. Catalyzes the attachment of glutamate to tRNA(Glu) in a two-step reaction: glutamate is first activated by ATP to form Glu-AMP and then transferred to the acceptor end of tRNA(Glu). This is Glutamate--tRNA ligase from Staphylococcus aureus (strain Mu3 / ATCC 700698).